The primary structure comprises 289 residues: ATP synthase gamma chain (289 aa).

The protein belongs to the ATPase gamma chain family. In terms of assembly, F-type ATPases have 2 components, CF(1) - the catalytic core - and CF(0) - the membrane proton channel. CF(1) has five subunits: alpha(3), beta(3), gamma(1), delta(1), epsilon(1). CF(0) has three main subunits: a, b and c.

Its subcellular location is the cell inner membrane. Its function is as follows. Produces ATP from ADP in the presence of a proton gradient across the membrane. The gamma chain is believed to be important in regulating ATPase activity and the flow of protons through the CF(0) complex. The protein is ATP synthase gamma chain of Actinobacillus succinogenes (strain ATCC 55618 / DSM 22257 / CCUG 43843 / 130Z).